A 387-amino-acid chain; its full sequence is 1-deoxy-D-xylulose 5-phosphate reductoisomerase (387 aa).

The NADPH site is built by threonine 10, glycine 11, isoleucine 13, asparagine 38, and asparagine 122. Lysine 123 serves as a coordination point for 1-deoxy-D-xylulose 5-phosphate. Glutamate 124 provides a ligand contact to NADPH. Aspartate 148 provides a ligand contact to Mn(2+). Residues serine 149, glutamate 150, serine 174, and histidine 197 each contribute to the 1-deoxy-D-xylulose 5-phosphate site. Mn(2+) is bound at residue glutamate 150. Glycine 203 provides a ligand contact to NADPH. Residues serine 210, asparagine 215, lysine 216, and glutamate 219 each coordinate 1-deoxy-D-xylulose 5-phosphate. A Mn(2+)-binding site is contributed by glutamate 219.

Belongs to the DXR family. Requires Mg(2+) as cofactor. The cofactor is Mn(2+).

It catalyses the reaction 2-C-methyl-D-erythritol 4-phosphate + NADP(+) = 1-deoxy-D-xylulose 5-phosphate + NADPH + H(+). Its pathway is isoprenoid biosynthesis; isopentenyl diphosphate biosynthesis via DXP pathway; isopentenyl diphosphate from 1-deoxy-D-xylulose 5-phosphate: step 1/6. Its function is as follows. Catalyzes the NADPH-dependent rearrangement and reduction of 1-deoxy-D-xylulose-5-phosphate (DXP) to 2-C-methyl-D-erythritol 4-phosphate (MEP). The protein is 1-deoxy-D-xylulose 5-phosphate reductoisomerase of Ehrlichia ruminantium (strain Welgevonden).